The primary structure comprises 237 residues: Sugar fermentation stimulation protein homolog (237 aa).

This sequence belongs to the SfsA family.

This Azorhizobium caulinodans (strain ATCC 43989 / DSM 5975 / JCM 20966 / LMG 6465 / NBRC 14845 / NCIMB 13405 / ORS 571) protein is Sugar fermentation stimulation protein homolog.